The primary structure comprises 485 residues: Glycogen synthase (485 aa).

Lysine 15 serves as a coordination point for ADP-alpha-D-glucose.

It belongs to the glycosyltransferase 1 family. Bacterial/plant glycogen synthase subfamily.

The enzyme catalyses [(1-&gt;4)-alpha-D-glucosyl](n) + ADP-alpha-D-glucose = [(1-&gt;4)-alpha-D-glucosyl](n+1) + ADP + H(+). The protein operates within glycan biosynthesis; glycogen biosynthesis. Functionally, synthesizes alpha-1,4-glucan chains using ADP-glucose. The sequence is that of Glycogen synthase from Thermosipho africanus (strain TCF52B).